The following is an 88-amino-acid chain: ATP synthase subunit c 2 (88 aa).

2 helical membrane passes run F4–I24 and I53–L73.

The protein belongs to the ATPase C chain family. In terms of assembly, F-type ATPases have 2 components, F(1) - the catalytic core - and F(0) - the membrane proton channel. F(1) has five subunits: alpha(3), beta(3), gamma(1), delta(1), epsilon(1). F(0) has three main subunits: a(1), b(2) and c(10-14). The alpha and beta chains form an alternating ring which encloses part of the gamma chain. F(1) is attached to F(0) by a central stalk formed by the gamma and epsilon chains, while a peripheral stalk is formed by the delta and b chains.

The protein resides in the cell inner membrane. In terms of biological role, f(1)F(0) ATP synthase produces ATP from ADP in the presence of a proton or sodium gradient. F-type ATPases consist of two structural domains, F(1) containing the extramembraneous catalytic core and F(0) containing the membrane proton channel, linked together by a central stalk and a peripheral stalk. During catalysis, ATP synthesis in the catalytic domain of F(1) is coupled via a rotary mechanism of the central stalk subunits to proton translocation. Its function is as follows. Key component of the F(0) channel; it plays a direct role in translocation across the membrane. A homomeric c-ring of between 10-14 subunits forms the central stalk rotor element with the F(1) delta and epsilon subunits. This is ATP synthase subunit c 2 from Syntrophotalea carbinolica (strain DSM 2380 / NBRC 103641 / GraBd1) (Pelobacter carbinolicus).